The primary structure comprises 460 residues: tRNA modification GTPase MnmE (460 aa).

(6S)-5-formyl-5,6,7,8-tetrahydrofolate is bound by residues Arg22, Glu87, and Arg126. A TrmE-type G domain is found at 222 to 381 (GLKTAIIGKP…LENTIYNLVF (160 aa)). Residue Asn232 participates in K(+) binding. Residues 232–237 (NVGKSS), 251–257 (TDIPGTT), and 276–279 (DTAG) each bind GTP. Ser236 is a binding site for Mg(2+). K(+) contacts are provided by Thr251, Ile253, and Thr256. Mg(2+) is bound at residue Thr257. Lys460 is a (6S)-5-formyl-5,6,7,8-tetrahydrofolate binding site.

Belongs to the TRAFAC class TrmE-Era-EngA-EngB-Septin-like GTPase superfamily. TrmE GTPase family. Homodimer. Heterotetramer of two MnmE and two MnmG subunits. The cofactor is K(+).

It localises to the cytoplasm. Functionally, exhibits a very high intrinsic GTPase hydrolysis rate. Involved in the addition of a carboxymethylaminomethyl (cmnm) group at the wobble position (U34) of certain tRNAs, forming tRNA-cmnm(5)s(2)U34. The sequence is that of tRNA modification GTPase MnmE from Thermoanaerobacter sp. (strain X514).